A 131-amino-acid polypeptide reads, in one-letter code: Arsenate reductase 2 (131 aa).

Catalysis depends on nucleophile residues cysteine 10, cysteine 82, and cysteine 89. Cystine bridges form between cysteine 10–cysteine 82 and cysteine 82–cysteine 89.

Belongs to the low molecular weight phosphotyrosine protein phosphatase family. Thioredoxin-coupled ArsC subfamily.

It localises to the cytoplasm. It catalyses the reaction arsenate + [thioredoxin]-dithiol + H(+) = arsenite + [thioredoxin]-disulfide + H2O. Its function is as follows. Catalyzes the reduction of arsenate [As(V)] to arsenite [As(III)]. This Staphylococcus saprophyticus subsp. saprophyticus (strain ATCC 15305 / DSM 20229 / NCIMB 8711 / NCTC 7292 / S-41) protein is Arsenate reductase 2.